The sequence spans 245 residues: MSRFDESVNIYSDGHLLQVEYAQEAVRKGSTVGLRTKECVVLGVEKRAIDSLQIERTSRKIKKIDQHMAMTFAGLTADARVLVSRAQVEAQSHRLNFDRPASVEYITRYLARLKQTYTQSVARRPFGVSCLIGGFDEDGRPRLFQTDPSGIYYEWSANTTGRLGQTVNEYLEKNTAAISRTPDAASAMKHVVRALFTATSLDPASIELAVLRYWQPIEMVKPETLEYLLGVIKQEAVEEALTKAP.

This sequence belongs to the peptidase T1A family. The 26S proteasome consists of a 20S proteasome core and two 19S regulatory subunits. The 20S proteasome core is composed of 28 subunits that are arranged in four stacked rings, resulting in a barrel-shaped structure. The two end rings are each formed by seven alpha subunits, and the two central rings are each formed by seven beta subunits. The catalytic chamber with the active sites is on the inside of the barrel. As to expression, testis specific.

It is found in the cytoplasm. The protein resides in the nucleus. Functionally, the proteasome is a multicatalytic proteinase complex which is characterized by its ability to cleave peptides with Arg, Phe, Tyr, Leu, and Glu adjacent to the leaving group at neutral or slightly basic pH. The proteasome has an ATP-dependent proteolytic activity. The polypeptide is Proteasome subunit alpha type-7-1B (Pros28.1B) (Drosophila virilis (Fruit fly)).